Consider the following 254-residue polypeptide: Type III pantothenate kinase (254 aa).

Residue 6 to 13 (DVGNTNTT) coordinates ATP. Substrate is bound by residues Tyr-100 and 107-110 (GADR). The active-site Proton acceptor is the Asp-109. Asp-129 is a K(+) binding site. Thr-132 contacts ATP. Thr-184 serves as a coordination point for substrate.

It belongs to the type III pantothenate kinase family. In terms of assembly, homodimer. The cofactor is NH4(+). K(+) serves as cofactor.

It is found in the cytoplasm. The enzyme catalyses (R)-pantothenate + ATP = (R)-4'-phosphopantothenate + ADP + H(+). It functions in the pathway cofactor biosynthesis; coenzyme A biosynthesis; CoA from (R)-pantothenate: step 1/5. Its function is as follows. Catalyzes the phosphorylation of pantothenate (Pan), the first step in CoA biosynthesis. This is Type III pantothenate kinase from Anaeromyxobacter dehalogenans (strain 2CP-1 / ATCC BAA-258).